The sequence spans 205 residues: Imidazole glycerol phosphate synthase subunit HisH (205 aa).

The region spanning 1–205 (MIALVDYGGG…FFKMALGDKK (205 aa)) is the Glutamine amidotransferase type-1 domain. Cysteine 79 (nucleophile) is an active-site residue. Residues histidine 181 and glutamate 183 contribute to the active site.

Heterodimer of HisH and HisF.

Its subcellular location is the cytoplasm. The catalysed reaction is 5-[(5-phospho-1-deoxy-D-ribulos-1-ylimino)methylamino]-1-(5-phospho-beta-D-ribosyl)imidazole-4-carboxamide + L-glutamine = D-erythro-1-(imidazol-4-yl)glycerol 3-phosphate + 5-amino-1-(5-phospho-beta-D-ribosyl)imidazole-4-carboxamide + L-glutamate + H(+). It catalyses the reaction L-glutamine + H2O = L-glutamate + NH4(+). It functions in the pathway amino-acid biosynthesis; L-histidine biosynthesis; L-histidine from 5-phospho-alpha-D-ribose 1-diphosphate: step 5/9. IGPS catalyzes the conversion of PRFAR and glutamine to IGP, AICAR and glutamate. The HisH subunit catalyzes the hydrolysis of glutamine to glutamate and ammonia as part of the synthesis of IGP and AICAR. The resulting ammonia molecule is channeled to the active site of HisF. The protein is Imidazole glycerol phosphate synthase subunit HisH of Dehalococcoides mccartyi (strain ATCC BAA-2266 / KCTC 15142 / 195) (Dehalococcoides ethenogenes (strain 195)).